We begin with the raw amino-acid sequence, 65 residues long: MSRSTNKLAVPGAESALDQMKYEIAQEFGVQLGADATARANGSVGGEITKRLVSLAEQQLGGYQK.

This sequence belongs to the alpha/beta-type SASP family.

Functionally, SASP are bound to spore DNA. They are double-stranded DNA-binding proteins that cause DNA to change to an a-like conformation. They protect the DNA backbone from chemical and enzymatic cleavage and are thus involved in dormant spore's high resistance to UV light. The sequence is that of Small, acid-soluble spore protein 2 (sasP-2) from Bacillus cereus.